Reading from the N-terminus, the 433-residue chain is Putative tartrate transporter (433 aa).

The next 11 membrane-spanning stretches (helical) occupy residues 17–37, 47–67, 82–102, 113–133, 139–159, 177–197, 242–262, 275–295, 314–334, 350–370, and 395–415; these read IVPF…NIGF, GFSS…YFLF, IWIA…AFVQ, LLGV…SFWF, AAVT…GSPI, WMFL…LFYL, VIAL…LGIW, LQVG…MVLW, LLAA…TVLI, LWSM…IATI, and FAGG…VTLV.

This sequence belongs to the major facilitator superfamily. Phthalate permease family.

The protein localises to the cell membrane. Functionally, component of the tartrate utilization system and may allow entry of tartrate and tartrate dehydrogenase. This Agrobacterium vitis (Rhizobium vitis) protein is Putative tartrate transporter (ttuB).